A 574-amino-acid chain; its full sequence is Septation ring formation regulator EzrA (574 aa).

Residues 1 to 7 lie on the Extracellular side of the membrane; it reads MSSGLIL. A helical transmembrane segment spans residues 8-26; that stretch reads LIVAIVLLVIIAYLVGVII. Residues 27–574 lie on the Cytoplasmic side of the membrane; it reads RKRNDTLITS…YEKTRERIRF (548 aa). Coiled-coil stretches lie at residues 102-131, 161-190, 276-379, and 459-493; these read NFIR…REAL, ENED…FVAL, VTLD…QQEK, and QLEA…NLEE.

It belongs to the EzrA family.

It localises to the cell membrane. Negative regulator of FtsZ ring formation; modulates the frequency and position of FtsZ ring formation. Inhibits FtsZ ring formation at polar sites. Interacts either with FtsZ or with one of its binding partners to promote depolymerization. This chain is Septation ring formation regulator EzrA, found in Streptococcus equi subsp. zooepidemicus (strain MGCS10565).